The chain runs to 302 residues: Nitric oxide synthase-interacting protein (302 aa).

Phosphoserine is present on S36. The segment at 55-75 (DPVVTPDGYLYEREAILEYIL) is U-box-like. The short motif at 78–101 (KKEIARQMKAYEKQRGARREEQKE) is the Nuclear localization signal element. The segment at 126–156 (LNPFTPKAASAGNGPDDAQPGSSAGPAGKDK) is disordered.

This sequence belongs to the NOSIP family. In terms of assembly, interacts with NOS1 and NOS3. Interacts with PP2A holoenzyme, containing PPP2CA, PPP2CB, PPP2R1A and PPP2R2A subunits.

It localises to the cytoplasm. The protein resides in the nucleus. The catalysed reaction is S-ubiquitinyl-[E2 ubiquitin-conjugating enzyme]-L-cysteine + [acceptor protein]-L-lysine = [E2 ubiquitin-conjugating enzyme]-L-cysteine + N(6)-ubiquitinyl-[acceptor protein]-L-lysine.. Functionally, E3 ubiquitin-protein ligase that is essential for proper development of the forebrain, the eye, and the face. Catalyzes monoubiquitination of serine/threonine-protein phosphatase 2A (PP2A) catalytic subunit PPP2CA/PPP2CB. Negatively regulates nitric oxide production by inducing NOS1 and NOS3 translocation to actin cytoskeleton and inhibiting their enzymatic activity. In Bos taurus (Bovine), this protein is Nitric oxide synthase-interacting protein (NOSIP).